Consider the following 448-residue polypeptide: UDP-N-acetylmuramoylalanine--D-glutamate ligase (448 aa).

116–122 is an ATP binding site; the sequence is GSNAKST.

It belongs to the MurCDEF family.

It localises to the cytoplasm. It catalyses the reaction UDP-N-acetyl-alpha-D-muramoyl-L-alanine + D-glutamate + ATP = UDP-N-acetyl-alpha-D-muramoyl-L-alanyl-D-glutamate + ADP + phosphate + H(+). It functions in the pathway cell wall biogenesis; peptidoglycan biosynthesis. Functionally, cell wall formation. Catalyzes the addition of glutamate to the nucleotide precursor UDP-N-acetylmuramoyl-L-alanine (UMA). This chain is UDP-N-acetylmuramoylalanine--D-glutamate ligase, found in Pseudomonas savastanoi pv. phaseolicola (strain 1448A / Race 6) (Pseudomonas syringae pv. phaseolicola (strain 1448A / Race 6)).